Here is a 157-residue protein sequence, read N- to C-terminus: MAEVANNEAQAPQFNIQRIYTKDLSFETPNSPAVFQKEWNPEVKLDLDTRSNKLSDDTYEVILSLTVTAKNGEDTAFLCEVQQAGIFSIVGLTEQQLAHSLGAYCPNVLFPYARELVGNLVGRGTFPQLNLAPVNFDALFAQYVQQRQAAATEEATA.

This sequence belongs to the SecB family. In terms of assembly, homotetramer, a dimer of dimers. One homotetramer interacts with 1 SecA dimer.

It is found in the cytoplasm. Functionally, one of the proteins required for the normal export of preproteins out of the cell cytoplasm. It is a molecular chaperone that binds to a subset of precursor proteins, maintaining them in a translocation-competent state. It also specifically binds to its receptor SecA. This Shewanella frigidimarina (strain NCIMB 400) protein is Protein-export protein SecB.